Reading from the N-terminus, the 73-residue chain is Exodeoxyribonuclease 7 small subunit (73 aa).

This sequence belongs to the XseB family. As to quaternary structure, heterooligomer composed of large and small subunits.

The protein resides in the cytoplasm. The enzyme catalyses Exonucleolytic cleavage in either 5'- to 3'- or 3'- to 5'-direction to yield nucleoside 5'-phosphates.. Its function is as follows. Bidirectionally degrades single-stranded DNA into large acid-insoluble oligonucleotides, which are then degraded further into small acid-soluble oligonucleotides. This chain is Exodeoxyribonuclease 7 small subunit, found in Clostridium novyi (strain NT).